The following is a 237-amino-acid chain: Ribonuclease PH (237 aa).

Residues Arg86 and Gly124 to Arg126 each bind phosphate.

Belongs to the RNase PH family. In terms of assembly, homohexameric ring arranged as a trimer of dimers.

The catalysed reaction is tRNA(n+1) + phosphate = tRNA(n) + a ribonucleoside 5'-diphosphate. In terms of biological role, phosphorolytic 3'-5' exoribonuclease that plays an important role in tRNA 3'-end maturation. Removes nucleotide residues following the 3'-CCA terminus of tRNAs; can also add nucleotides to the ends of RNA molecules by using nucleoside diphosphates as substrates, but this may not be physiologically important. Probably plays a role in initiation of 16S rRNA degradation (leading to ribosome degradation) during starvation. The sequence is that of Ribonuclease PH from Dinoroseobacter shibae (strain DSM 16493 / NCIMB 14021 / DFL 12).